The sequence spans 679 residues: Stress-70 protein, mitochondrial (679 aa).

A mitochondrion-targeting transit peptide spans 1 to 46 (MISASRAAAARLVGTAASRSPAAARPQDGWNGLSHEAFRFVSRRDY). An interaction with NFS1 region spans residues 1–432 (MISASRAAAA…IQGGVLAGDV (432 aa)). The ADP site is built by Thr63 and Asn64. The tract at residues 63–431 (TNSCVAVMEG…AIQGGVLAGD (369 aa)) is nucleotide-binding domain (NBD). Position 76 is an N6-acetyllysine (Lys76). Thr87 carries the post-translational modification Phosphothreonine. N6-acetyllysine; alternate is present on residues Lys135 and Lys138. N6-succinyllysine; alternate is present on residues Lys135 and Lys138. Lys143 carries the post-translational modification N6-acetyllysine. Lys206 is subject to N6-acetyllysine; alternate. Lys206 is modified (N6-succinyllysine; alternate). At Lys206 the chain carries N6-malonyllysine; alternate. N6-acetyllysine is present on residues Lys234 and Lys288. An N6-acetyllysine; alternate modification is found at Lys300. An N6-succinyllysine; alternate modification is found at Lys300. Residues Glu313, Lys316, and Ser320 each contribute to the ADP site. N6-acetyllysine; alternate is present on Lys360. Residue Lys360 is modified to N6-succinyllysine; alternate. Lys368 carries the post-translational modification N6-succinyllysine. ADP contacts are provided by Gly388 and Arg391. At Lys394 the chain carries N6-succinyllysine. Ser408 is modified (phosphoserine). An interdomain linker region spans residues 432 to 441 (VTDVLLLDVT). An interaction with FXN and ISCU region spans residues 432–679 (VTDVLLLDVT…QKEDQKEEKQ (248 aa)). Positions 442–679 (PLSLGIETLG…QKEDQKEEKQ (238 aa)) are substrate-binding domain (SBD). Omega-N-methylarginine is present on Arg513. N6-acetyllysine; alternate occurs at positions 567 and 600. N6-succinyllysine; alternate occurs at positions 567 and 600. Lys610 is modified (N6-succinyllysine). Lys612 carries the post-translational modification N6-acetyllysine. Lys646 bears the N6-acetyllysine; alternate mark. The residue at position 646 (Lys646) is an N6-succinyllysine; alternate. The segment at 656–679 (ASEREGSGSSGTGEQKEDQKEEKQ) is disordered. Positions 669 to 679 (EQKEDQKEEKQ) are enriched in basic and acidic residues.

This sequence belongs to the heat shock protein 70 family. Interacts strongly with the intermediate form of FXN and weakly with its mature form. Interacts with HSCB. Associates with the mitochondrial contact site and cristae organizing system (MICOS) complex, composed of at least MICOS10/MIC10, CHCHD3/MIC19, CHCHD6/MIC25, APOOL/MIC27, IMMT/MIC60, APOO/MIC23/MIC26 and QIL1/MIC13. This complex was also known under the names MINOS or MitOS complex. The MICOS complex associates with mitochondrial outer membrane proteins SAMM50, MTX1, MTX2 and DNAJC11, mitochondrial inner membrane protein TMEM11 and with HSPA9. Interacts with DNLZ, the interaction is required to prevent self-aggregation. Interacts with TESPA1. Interacts with PDPN. Interacts with NFU1, NFS1 and ISCU. Interacts with TP53; the interaction promotes TP53 degradation. Interacts (via SBD domain) with UBXN2A; the interaction with UBXN2A inhibits HSPA9/MOT-2 interaction with and degradation of TP53, thereby promotes TP53 translocation to the nucleus. Interacts with ITPR1 AND VDAC1; this interaction couples ITPR1 to VDAC1. Component of the TIM23 mitochondrial inner membrane pre-sequence translocase complex.

Its subcellular location is the mitochondrion. It is found in the nucleus. It localises to the nucleolus. The protein localises to the cytoplasm. The protein resides in the mitochondrion matrix. The enzyme catalyses ATP + H2O = ADP + phosphate + H(+). The chaperone activity is regulated by ATP-induced allosteric coupling of the nucleotide-binding (NBD) and substrate-binding (SBD) domains. ATP binding in the NBD leads to a conformational change in the NBD, which is transferred through the interdomain linker (IDL) to the substrate-binding domain (SBD). This elicits a reduced substrate affinity and a faster substrate exchange rate. Upon hydrolysis of ATP to ADP, the protein undergoes a conformational change that increases its affinity for substrate proteins. It cycles through repeated phases of ATP hydrolysis and nucleotide exchange, facilitating repeated cycles of substrate binding and release. Functions in collaboration with co-chaperones. Functions with the co-chaperone, DNLZ, to maintain solubility and regulate ATP hydrolysis. Nucleotide exchange factors, GRPEL1 and GRPEL2, accelerate nucleotide exchange. In terms of biological role, mitochondrial chaperone that plays a key role in mitochondrial protein import, folding, and assembly. Plays an essential role in the protein quality control system, the correct folding of proteins, the re-folding of misfolded proteins, and the targeting of proteins for subsequent degradation. These processes are achieved through cycles of ATP binding, ATP hydrolysis, and ADP release, mediated by co-chaperones. In mitochondria, it associates with the TIM (translocase of the inner membrane) protein complex to assist in the import and folding of mitochondrial proteins. Plays an important role in mitochondrial iron-sulfur cluster (ISC) biogenesis. Interacts with and stabilizes ISC cluster assembly proteins FXN, NFU1, NFS1 and ISCU. Regulates erythropoiesis via stabilization of ISC assembly. Regulates mitochondrial calcium-dependent apoptosis by coupling two calcium channels, ITPR1 and VDAC1, at the mitochondria-associated endoplasmic reticulum (ER) membrane to facilitate calcium transport from the ER lumen to the mitochondria intermembrane space, providing calcium for the downstream calcium channel MCU, which releases it into the mitochondrial matrix. Although primarily located in the mitochondria, it is also found in other cellular compartments. In the cytosol, it associates with proteins involved in signaling, apoptosis, or senescence. It may play a role in cell cycle regulation via its interaction with and promotion of degradation of TP53. May play a role in the control of cell proliferation and cellular aging. Protects against reactive oxygen species (ROS). Extracellular HSPA9 plays a cytoprotective role by preventing cell lysis following immune attack by the membrane attack complex by disrupting formation of the complex. The sequence is that of Stress-70 protein, mitochondrial from Mus musculus (Mouse).